Consider the following 256-residue polypeptide: Isoprenyl transferase (256 aa).

Asp33 is an active-site residue. Asp33 contacts Mg(2+). Substrate-binding positions include 34–37 (GNGR), Trp38, Arg46, His50, and 78–80 (STE). The active-site Proton acceptor is Asn81. Residues Trp82, Arg84, Arg201, and 207–209 (RIS) contribute to the substrate site. Glu220 contributes to the Mg(2+) binding site.

Belongs to the UPP synthase family. Homodimer. Mg(2+) is required as a cofactor.

Functionally, catalyzes the condensation of isopentenyl diphosphate (IPP) with allylic pyrophosphates generating different type of terpenoids. The chain is Isoprenyl transferase from Staphylococcus haemolyticus (strain JCSC1435).